Here is a 247-residue protein sequence, read N- to C-terminus: 2,3-bisphosphoglycerate-dependent phosphoglycerate mutase (247 aa).

Substrate-binding positions include 8-15 (RHGESVWN), 21-22 (TG), Arg60, 87-90 (ERHY), Lys98, 114-115 (RR), and 183-184 (GN). Residue His9 is the Tele-phosphohistidine intermediate of the active site. The Proton donor/acceptor role is filled by Glu87.

Belongs to the phosphoglycerate mutase family. BPG-dependent PGAM subfamily. In terms of assembly, homodimer.

The enzyme catalyses (2R)-2-phosphoglycerate = (2R)-3-phosphoglycerate. It participates in carbohydrate degradation; glycolysis; pyruvate from D-glyceraldehyde 3-phosphate: step 3/5. Functionally, catalyzes the interconversion of 2-phosphoglycerate and 3-phosphoglycerate. In Geobacter metallireducens (strain ATCC 53774 / DSM 7210 / GS-15), this protein is 2,3-bisphosphoglycerate-dependent phosphoglycerate mutase.